The chain runs to 686 residues: ATP-dependent DNA helicase RecG (686 aa).

The wedge domain stretch occupies residues 50 to 149; sequence TVIDLNQAED…GTQTQENADV (100 aa). Residues 279 to 439 form the Helicase ATP-binding domain; sequence DLKAPIRMHR…VFGEMDVSSI (161 aa). ATP is bound at residue 292–299; it reads GDVGSGKT. Positions 392–395 match the DEAH box motif; it reads DEQH. One can recognise a Helicase C-terminal domain in the interval 462 to 618; the sequence is VLMQMTSELK…GFELSERDLE (157 aa).

Belongs to the helicase family. RecG subfamily. Monomer.

It catalyses the reaction Couples ATP hydrolysis with the unwinding of duplex DNA by translocating in the 3'-5' direction.. The enzyme catalyses ATP + H2O = ADP + phosphate + H(+). Functionally, plays a critical role in recombination and DNA repair. Helps process Holliday junction intermediates to mature products by catalyzing branch migration. Has replication fork regression activity, unwinds stalled or blocked replication forks to make a HJ that can be resolved. Has a DNA unwinding activity characteristic of a DNA helicase with 3'-5' polarity. In Staphylococcus aureus (strain NCTC 8325 / PS 47), this protein is ATP-dependent DNA helicase RecG.